The primary structure comprises 206 residues: Thiamine-phosphate synthase (206 aa).

4-amino-2-methyl-5-(diphosphooxymethyl)pyrimidine-binding positions include 37-41 (QYRNK) and Asn-69. 2 residues coordinate Mg(2+): Asp-70 and Asp-89. Ser-108 is a binding site for 4-amino-2-methyl-5-(diphosphooxymethyl)pyrimidine. 2-[(2R,5Z)-2-carboxy-4-methylthiazol-5(2H)-ylidene]ethyl phosphate is bound at residue 135–137 (SST). Lys-138 provides a ligand contact to 4-amino-2-methyl-5-(diphosphooxymethyl)pyrimidine. 2-[(2R,5Z)-2-carboxy-4-methylthiazol-5(2H)-ylidene]ethyl phosphate is bound by residues Gly-165 and 185–186 (IS).

This sequence belongs to the thiamine-phosphate synthase family. It depends on Mg(2+) as a cofactor.

It carries out the reaction 2-[(2R,5Z)-2-carboxy-4-methylthiazol-5(2H)-ylidene]ethyl phosphate + 4-amino-2-methyl-5-(diphosphooxymethyl)pyrimidine + 2 H(+) = thiamine phosphate + CO2 + diphosphate. It catalyses the reaction 2-(2-carboxy-4-methylthiazol-5-yl)ethyl phosphate + 4-amino-2-methyl-5-(diphosphooxymethyl)pyrimidine + 2 H(+) = thiamine phosphate + CO2 + diphosphate. The enzyme catalyses 4-methyl-5-(2-phosphooxyethyl)-thiazole + 4-amino-2-methyl-5-(diphosphooxymethyl)pyrimidine + H(+) = thiamine phosphate + diphosphate. It participates in cofactor biosynthesis; thiamine diphosphate biosynthesis; thiamine phosphate from 4-amino-2-methyl-5-diphosphomethylpyrimidine and 4-methyl-5-(2-phosphoethyl)-thiazole: step 1/1. In terms of biological role, condenses 4-methyl-5-(beta-hydroxyethyl)thiazole monophosphate (THZ-P) and 2-methyl-4-amino-5-hydroxymethyl pyrimidine pyrophosphate (HMP-PP) to form thiamine monophosphate (TMP). This Azoarcus sp. (strain BH72) protein is Thiamine-phosphate synthase.